The sequence spans 781 residues: uncharacterized protein (781 aa).

Residues 1 to 34 (MNIAEEPSDEVISSGPEDTDICSQQTSASAEAGD) form a disordered region. Serine 29 is subject to Phosphoserine. 2 RRM domains span residues 195–273 (GNIF…YHVE) and 295–418 (RCLF…KAVQ). The disordered stretch occupies residues 345–375 (SNTRSSSSVSFNEEGSVESNKSSNNTNGNAQ). Over residues 347 to 364 (TRSSSSVSFNEEGSVESN) the composition is skewed to low complexity. Polar residues predominate over residues 365-374 (KSSNNTNGNA). 4 positions are modified to phosphoserine: serine 433, serine 435, serine 482, and serine 485. Threonine 486 carries the post-translational modification Phosphothreonine. Serine 501 carries the phosphoserine modification. The 99-residue stretch at 540–638 (SNLYVKHIPL…QVLSVSFAQK (99 aa)) folds into the RRM 3 domain. The disordered stretch occupies residues 640–668 (GNLSSSDDDDQSQTDNSSKFQNFQPHNDY).

Interacts with RBG1.

This is an uncharacterized protein from Saccharomyces cerevisiae (strain ATCC 204508 / S288c) (Baker's yeast).